Consider the following 68-residue polypeptide: Inhibitor of trypsin and hageman factor (68 aa).

S1 carries the N-acetylserine modification. C3 and C48 form a disulfide bridge.

It belongs to the protease inhibitor I13 (potato type I serine protease inhibitor) family.

Functionally, specifically inhibits both trypsin and activated Hageman factor. The sequence is that of Inhibitor of trypsin and hageman factor from Cucurbita maxima (Pumpkin).